The sequence spans 272 residues: Phosphate import ATP-binding protein PstB 1 (272 aa).

An ABC transporter domain is found at 26 to 267; sequence LEIRNLDLRY…PKKRKTEDYI (242 aa). Residue 58–65 coordinates ATP; sequence GPSGCGKS.

This sequence belongs to the ABC transporter superfamily. Phosphate importer (TC 3.A.1.7) family. The complex is composed of two ATP-binding proteins (PstB), two transmembrane proteins (PstC and PstA) and a solute-binding protein (PstS).

The protein localises to the cell inner membrane. It catalyses the reaction phosphate(out) + ATP + H2O = ADP + 2 phosphate(in) + H(+). Its function is as follows. Part of the ABC transporter complex PstSACB involved in phosphate import. Responsible for energy coupling to the transport system. The chain is Phosphate import ATP-binding protein PstB 1 from Shewanella oneidensis (strain ATCC 700550 / JCM 31522 / CIP 106686 / LMG 19005 / NCIMB 14063 / MR-1).